Here is a 144-residue protein sequence, read N- to C-terminus: Glutaredoxin-C6 (144 aa).

In terms of domain architecture, Glutaredoxin spans 39–143 (EAKIRRLISE…PKLVQVGALW (105 aa)). Cys59 and Cys62 are joined by a disulfide.

Belongs to the glutaredoxin family. CC-type subfamily.

It localises to the cytoplasm. Has a glutathione-disulfide oxidoreductase activity in the presence of NADPH and glutathione reductase. Reduces low molecular weight disulfides and proteins. The polypeptide is Glutaredoxin-C6 (GRXC6) (Arabidopsis thaliana (Mouse-ear cress)).